Reading from the N-terminus, the 252-residue chain is Adenosylcobinamide-GDP ribazoletransferase (252 aa).

Transmembrane regions (helical) follow at residues Phe33–Leu53, Thr105–Leu125, Leu132–Leu152, Phe184–Phe204, and Met215–Ala235.

Belongs to the CobS family. Requires Mg(2+) as cofactor.

The protein localises to the cell membrane. It catalyses the reaction alpha-ribazole + adenosylcob(III)inamide-GDP = adenosylcob(III)alamin + GMP + H(+). The enzyme catalyses alpha-ribazole 5'-phosphate + adenosylcob(III)inamide-GDP = adenosylcob(III)alamin 5'-phosphate + GMP + H(+). It participates in cofactor biosynthesis; adenosylcobalamin biosynthesis; adenosylcobalamin from cob(II)yrinate a,c-diamide: step 7/7. In terms of biological role, joins adenosylcobinamide-GDP and alpha-ribazole to generate adenosylcobalamin (Ado-cobalamin). Also synthesizes adenosylcobalamin 5'-phosphate from adenosylcobinamide-GDP and alpha-ribazole 5'-phosphate. This chain is Adenosylcobinamide-GDP ribazoletransferase, found in Sulfolobus acidocaldarius (strain ATCC 33909 / DSM 639 / JCM 8929 / NBRC 15157 / NCIMB 11770).